The chain runs to 308 residues: 1D-myo-inositol 2-acetamido-2-deoxy-alpha-D-glucopyranoside deacetylase (308 aa).

Zn(2+) contacts are provided by H13, D16, and H147.

Belongs to the MshB deacetylase family. Zn(2+) is required as a cofactor.

It carries out the reaction 1D-myo-inositol 2-acetamido-2-deoxy-alpha-D-glucopyranoside + H2O = 1D-myo-inositol 2-amino-2-deoxy-alpha-D-glucopyranoside + acetate. Catalyzes the deacetylation of 1D-myo-inositol 2-acetamido-2-deoxy-alpha-D-glucopyranoside (GlcNAc-Ins) in the mycothiol biosynthesis pathway. This Mycobacterium leprae (strain Br4923) protein is 1D-myo-inositol 2-acetamido-2-deoxy-alpha-D-glucopyranoside deacetylase.